We begin with the raw amino-acid sequence, 96 residues long: UPF0235 protein KPK_0722 (96 aa).

Belongs to the UPF0235 family.

The sequence is that of UPF0235 protein KPK_0722 from Klebsiella pneumoniae (strain 342).